We begin with the raw amino-acid sequence, 343 residues long: Protein RecA (343 aa).

66–73 is a binding site for ATP; it reads GPESSGKT.

It belongs to the RecA family.

It is found in the cytoplasm. Functionally, can catalyze the hydrolysis of ATP in the presence of single-stranded DNA, the ATP-dependent uptake of single-stranded DNA by duplex DNA, and the ATP-dependent hybridization of homologous single-stranded DNAs. It interacts with LexA causing its activation and leading to its autocatalytic cleavage. The chain is Protein RecA from Rickettsia africae (strain ESF-5).